The following is a 750-amino-acid chain: MEQTYQYAWIIPFLPLPVPMLIGVGLLLFPTATKNLRRMWAFTSILLLSIVMIFATNLSIQQINTSSIYQYVWSWTLDNDFSLEFGYLIDPLTSIMSMLITTVGIMVLIYSDNYMAHDQGYLRFFAYMSFFSTSMFGLVTSSNLIQIYIFWELVGMCSYLLIGFWFTRPPAANACQKAFVTNRVGDFGLLLGILGFYWITGSFEFRDLFQIFNNLISNNEVNSPFVTLCAALLFAGAVAKSAQFPLHIWLPDAMEGPTPISALIHAATMVAAGIFLVARLLTLFIVIPYILNIISLIGLITVLLGATLALAQKDIKRGLAYSTMSQLGYMILALGIGSYRSALFHLITHAYSKALLFLGSGSVIHSMETIVGYSPDKSQNMVLMGGLTKHVPITKTSFLLGTLSLSGIPPLACFWSKDEILNDSWLYSPIFAIIAWATAGLTAFYMFRIYLLTFEGHLNCHFQNYSGSQNTSLYSISLWGSTCSQRINKNFHLLRMNNNESSSFFSKKTYRSDQTLRKTNRGRPFINIVHFDTKKPFSYPYESDNTMLFPLLVLVLFTLFVGSIGIPFNQEGTDLDILSKWLAPSINLLHQKSKDSTDWYEFLKDAIFSVSIAYFGIFLASFLYKPIYSSLKNFDFINFFVKTGPKRYRWDKILTVLYDWSYNRAYIDPFYTTCFTGAIRGLAQLTYFFDRRVIDGITNGVGIMSFFLGEGIKYASGGRISSYLFFYFCCVSIFLVIYYKFYLFSLYIPF.

Helical transmembrane passes span 9–29 (WIIP…LLLF), 40–60 (WAFT…NLSI), 89–109 (IDPL…MVLI), 125–145 (FAYM…SNLI), 147–167 (IYIF…FWFT), 185–205 (GDFG…SFEF), 230–250 (AALL…HIWL), 258–278 (TPIS…FLVA), 283–303 (LFIV…ITVL), 327–347 (LGYM…FHLI), 354–374 (ALLF…VGYS), 396–416 (TSFL…CFWS), 425–445 (WLYS…TAFY), 548–568 (LFPL…GIPF), 607–627 (IFSV…YKPI), and 724–744 (LFFY…FYLF).

The protein belongs to the complex I subunit 5 family. NDH is composed of at least 16 different subunits, 5 of which are encoded in the nucleus.

It is found in the plastid. It localises to the chloroplast thylakoid membrane. It catalyses the reaction a plastoquinone + NADH + (n+1) H(+)(in) = a plastoquinol + NAD(+) + n H(+)(out). The catalysed reaction is a plastoquinone + NADPH + (n+1) H(+)(in) = a plastoquinol + NADP(+) + n H(+)(out). NDH shuttles electrons from NAD(P)H:plastoquinone, via FMN and iron-sulfur (Fe-S) centers, to quinones in the photosynthetic chain and possibly in a chloroplast respiratory chain. The immediate electron acceptor for the enzyme in this species is believed to be plastoquinone. Couples the redox reaction to proton translocation, and thus conserves the redox energy in a proton gradient. The sequence is that of NAD(P)H-quinone oxidoreductase subunit 5, chloroplastic (ndhF) from Tecoma stans (Yellow bells).